A 433-amino-acid polypeptide reads, in one-letter code: Serine hydroxymethyltransferase (433 aa).

Residues leucine 132 and 136–138 each bind (6S)-5,6,7,8-tetrahydrofolate; that span reads GHL. N6-(pyridoxal phosphate)lysine is present on lysine 241.

It belongs to the SHMT family. As to quaternary structure, homodimer. Requires pyridoxal 5'-phosphate as cofactor.

It localises to the cytoplasm. The catalysed reaction is (6R)-5,10-methylene-5,6,7,8-tetrahydrofolate + glycine + H2O = (6S)-5,6,7,8-tetrahydrofolate + L-serine. It participates in one-carbon metabolism; tetrahydrofolate interconversion. It functions in the pathway amino-acid biosynthesis; glycine biosynthesis; glycine from L-serine: step 1/1. Catalyzes the reversible interconversion of serine and glycine with tetrahydrofolate (THF) serving as the one-carbon carrier. This reaction serves as the major source of one-carbon groups required for the biosynthesis of purines, thymidylate, methionine, and other important biomolecules. Also exhibits THF-independent aldolase activity toward beta-hydroxyamino acids, producing glycine and aldehydes, via a retro-aldol mechanism. The protein is Serine hydroxymethyltransferase of Rhodopseudomonas palustris (strain HaA2).